A 372-amino-acid polypeptide reads, in one-letter code: NAD(P)H-quinone oxidoreductase subunit 1 (372 aa).

8 consecutive transmembrane segments (helical) span residues 28 to 48 (IWLPLPLLLMIIGATVGVLVV), 97 to 117 (WLFTLGPALVVIPVFLSYLIV), 130 to 150 (VGIFLWISLSSIAPIGLLMSG), 176 to 196 (LALAVLAIAMMSNSLSTIDIV), 204 to 224 (ILGWNIWRQPVGFLIFWIAAL), 265 to 285 (LVLSALIVSILYLGGWEFPIP), 308 to 328 (SLGIIMTLVKTYALVFIAVLL), and 351 to 371 (VALVNLLLTAALKLAFPIAFG).

It belongs to the complex I subunit 1 family. NDH-1 is composed of at least 11 different subunits.

The protein resides in the cellular thylakoid membrane. It catalyses the reaction a plastoquinone + NADH + (n+1) H(+)(in) = a plastoquinol + NAD(+) + n H(+)(out). The catalysed reaction is a plastoquinone + NADPH + (n+1) H(+)(in) = a plastoquinol + NADP(+) + n H(+)(out). Its function is as follows. NDH-1 shuttles electrons from an unknown electron donor, via FMN and iron-sulfur (Fe-S) centers, to quinones in the respiratory and/or the photosynthetic chain. The immediate electron acceptor for the enzyme in this species is believed to be plastoquinone. Couples the redox reaction to proton translocation, and thus conserves the redox energy in a proton gradient. This Picosynechococcus sp. (strain ATCC 27264 / PCC 7002 / PR-6) (Agmenellum quadruplicatum) protein is NAD(P)H-quinone oxidoreductase subunit 1.